Reading from the N-terminus, the 293-residue chain is Probable metal transport system membrane protein CT_417 (293 aa).

The next 7 membrane-spanning stretches (helical) occupy residues 18–38 (SLLAAFGASIAAGIIGSYIVV), 41–61 (IVSISGSIAHSILGGVGIALW), 68–88 (LPISPLHGAIASAIFVAICIG), 101–121 (IISMIWSIGMAIGIICISKLP), 135–155 (ILWVTPQDLYFLGILDLFIVA), 187–207 (LLLILTAITTVVLMYVMGVIL), and 242–262 (FLGIMLAYLLDLPVGPVIAIL).

Belongs to the ABC-3 integral membrane protein family.

The protein resides in the cell inner membrane. Functionally, part of an ATP-driven transport system CT_415/CT_416/CT_417 for a metal. The sequence is that of Probable metal transport system membrane protein CT_417 from Chlamydia trachomatis serovar D (strain ATCC VR-885 / DSM 19411 / UW-3/Cx).